We begin with the raw amino-acid sequence, 114 residues long: Non-specific lipid-transfer protein 2 (114 aa).

The N-terminal stretch at 1 to 23 is a signal peptide; sequence MEMVNKIACFVLLCMVVVAPHAE. 4 cysteine pairs are disulfide-bonded: C27-C73, C37-C50, C51-C96, and C71-C110.

The protein belongs to the plant LTP family.

Functionally, plant non-specific lipid-transfer proteins transfer phospholipids as well as galactolipids across membranes. May play a role in wax or cutin deposition in the cell walls of expanding epidermal cells and certain secretory tissues. This Solanum pennellii (Tomato) protein is Non-specific lipid-transfer protein 2 (LTP2).